A 241-amino-acid polypeptide reads, in one-letter code: Probable septum site-determining protein MinC (241 aa).

The tract at residues 109 to 135 is disordered; sequence PSGARERKVDPSSKTPAKPAEPTYRPT.

It belongs to the MinC family. Interacts with MinD and FtsZ.

Cell division inhibitor that blocks the formation of polar Z ring septums. Rapidly oscillates between the poles of the cell to destabilize FtsZ filaments that have formed before they mature into polar Z rings. Prevents FtsZ polymerization. The sequence is that of Probable septum site-determining protein MinC from Stutzerimonas stutzeri (strain A1501) (Pseudomonas stutzeri).